A 181-amino-acid polypeptide reads, in one-letter code: UPF0397 protein str0306 (181 aa).

Transmembrane regions (helical) follow at residues Ala-11–Phe-31, Leu-45–Leu-65, Gly-72–Phe-92, Ile-109–Ile-129, and Phe-147–Ile-167.

The protein belongs to the UPF0397 family.

Its subcellular location is the cell membrane. The protein is UPF0397 protein str0306 of Streptococcus thermophilus (strain CNRZ 1066).